Consider the following 457-residue polypeptide: tRNA-2-methylthio-N(6)-dimethylallyladenosine synthase (457 aa).

Positions 3-120 (KKVYVKTFGC…LPQMIDARRA (118 aa)) constitute an MTTase N-terminal domain. 6 residues coordinate [4Fe-4S] cluster: cysteine 12, cysteine 49, cysteine 83, cysteine 157, cysteine 161, and cysteine 164. Residues 143–377 (RVEGPSAFVS…QATIEENVAR (235 aa)) enclose the Radical SAM core domain. The 68-residue stretch at 380-447 (QSMVGKVERI…PHSLRGELLL (68 aa)) folds into the TRAM domain.

Belongs to the methylthiotransferase family. MiaB subfamily. Monomer. [4Fe-4S] cluster is required as a cofactor.

The protein resides in the cytoplasm. It carries out the reaction N(6)-dimethylallyladenosine(37) in tRNA + (sulfur carrier)-SH + AH2 + 2 S-adenosyl-L-methionine = 2-methylsulfanyl-N(6)-dimethylallyladenosine(37) in tRNA + (sulfur carrier)-H + 5'-deoxyadenosine + L-methionine + A + S-adenosyl-L-homocysteine + 2 H(+). In terms of biological role, catalyzes the methylthiolation of N6-(dimethylallyl)adenosine (i(6)A), leading to the formation of 2-methylthio-N6-(dimethylallyl)adenosine (ms(2)i(6)A) at position 37 in tRNAs that read codons beginning with uridine. The polypeptide is tRNA-2-methylthio-N(6)-dimethylallyladenosine synthase (Burkholderia vietnamiensis (strain G4 / LMG 22486) (Burkholderia cepacia (strain R1808))).